The sequence spans 62 residues: Large ribosomal subunit protein bL28 (62 aa).

The protein belongs to the bacterial ribosomal protein bL28 family.

The polypeptide is Large ribosomal subunit protein bL28 (Onion yellows phytoplasma (strain OY-M)).